The following is a 61-amino-acid chain: Small ribosomal subunit protein uS14 (61 aa).

Zn(2+)-binding residues include cysteine 24, cysteine 27, cysteine 40, and cysteine 43.

The protein belongs to the universal ribosomal protein uS14 family. Zinc-binding uS14 subfamily. Part of the 30S ribosomal subunit. Contacts proteins S3 and S10. Zn(2+) serves as cofactor.

Binds 16S rRNA, required for the assembly of 30S particles and may also be responsible for determining the conformation of the 16S rRNA at the A site. The protein is Small ribosomal subunit protein uS14 of Mycobacterium sp. (strain JLS).